The following is a 222-amino-acid chain: Endonuclease V (222 aa).

2 residues coordinate Mg(2+): Asp43 and Asp109.

It belongs to the endonuclease V family. Requires Mg(2+) as cofactor.

It localises to the cytoplasm. The enzyme catalyses Endonucleolytic cleavage at apurinic or apyrimidinic sites to products with a 5'-phosphate.. Functionally, DNA repair enzyme involved in the repair of deaminated bases. Selectively cleaves double-stranded DNA at the second phosphodiester bond 3' to a deoxyinosine leaving behind the intact lesion on the nicked DNA. In Roseiflexus castenholzii (strain DSM 13941 / HLO8), this protein is Endonuclease V.